The sequence spans 634 residues: Carbon monoxide dehydrogenase 2 (634 aa).

Positions 44, 53, 56, 61, and 73 each coordinate [4Fe-4S] cluster. [Ni-4Fe-5S] cluster contacts are provided by His264, Cys343, Cys453, Cys484, and Cys525.

This sequence belongs to the Ni-containing carbon monoxide dehydrogenase family. In terms of assembly, homodimer. The cofactor is [4Fe-4S] cluster. [Ni-4Fe-5S] cluster serves as cofactor.

The catalysed reaction is CO + 2 oxidized [2Fe-2S]-[ferredoxin] + H2O = 2 reduced [2Fe-2S]-[ferredoxin] + CO2 + 2 H(+). Its function is as follows. CODH oxidizes carbon monoxide coupled, via CooF, to the reduction of a hydrogen cation by a hydrogenase (possibly CooH). This chain is Carbon monoxide dehydrogenase 2 (cooS2), found in Methanosarcina mazei (strain ATCC BAA-159 / DSM 3647 / Goe1 / Go1 / JCM 11833 / OCM 88) (Methanosarcina frisia).